Reading from the N-terminus, the 87-residue chain is Putative defensin-like protein 304 (87 aa).

A signal peptide spans 1 to 19 (MKSNKVTFFLGLFLVSAFC). Intrachain disulfides connect cysteine 27–cysteine 46, cysteine 33–cysteine 51, and cysteine 40–cysteine 53.

This sequence belongs to the DEFL family.

The protein localises to the secreted. The sequence is that of Putative defensin-like protein 304 from Arabidopsis thaliana (Mouse-ear cress).